Consider the following 881-residue polypeptide: Protein translocase subunit SecA (881 aa).

ATP is bound by residues Gln-83, 101–105 (GEGKT), and Asp-492.

This sequence belongs to the SecA family.

It localises to the plastid. The protein resides in the chloroplast stroma. It is found in the chloroplast thylakoid membrane. The enzyme catalyses ATP + H2O + cellular proteinSide 1 = ADP + phosphate + cellular proteinSide 2.. Functionally, has a central role in coupling the hydrolysis of ATP to the transfer of proteins across the thylakoid membrane. This Emiliania huxleyi (Coccolithophore) protein is Protein translocase subunit SecA.